Reading from the N-terminus, the 55-residue chain is Large ribosomal subunit protein bL33 (55 aa).

It belongs to the bacterial ribosomal protein bL33 family.

In Sinorhizobium fredii (strain NBRC 101917 / NGR234), this protein is Large ribosomal subunit protein bL33.